Here is a 545-residue protein sequence, read N- to C-terminus: CTP synthase (545 aa).

Residues 1 to 267 (MTKFIFVTGG…AEQVLNLLQM (267 aa)) are amidoligase domain. Position 13 (S13) interacts with CTP. S13 provides a ligand contact to UTP. ATP is bound by residues 14–19 (SIGKGI) and D71. 2 residues coordinate Mg(2+): D71 and E141. CTP contacts are provided by residues 148–150 (DIE), 188–193 (KTKPTQ), and K224. UTP contacts are provided by residues 188–193 (KTKPTQ) and K224. One can recognise a Glutamine amidotransferase type-1 domain in the interval 292 to 534 (EIAIVGKYVQ…IQAAIALSLS (243 aa)). G354 contacts L-glutamine. C381 functions as the Nucleophile; for glutamine hydrolysis in the catalytic mechanism. Residues 382-385 (LGMQ), E405, and R462 contribute to the L-glutamine site. Active-site residues include H507 and E509.

This sequence belongs to the CTP synthase family. Homotetramer.

The catalysed reaction is UTP + L-glutamine + ATP + H2O = CTP + L-glutamate + ADP + phosphate + 2 H(+). It catalyses the reaction L-glutamine + H2O = L-glutamate + NH4(+). The enzyme catalyses UTP + NH4(+) + ATP = CTP + ADP + phosphate + 2 H(+). It functions in the pathway pyrimidine metabolism; CTP biosynthesis via de novo pathway; CTP from UDP: step 2/2. Allosterically activated by GTP, when glutamine is the substrate; GTP has no effect on the reaction when ammonia is the substrate. The allosteric effector GTP functions by stabilizing the protein conformation that binds the tetrahedral intermediate(s) formed during glutamine hydrolysis. Inhibited by the product CTP, via allosteric rather than competitive inhibition. In terms of biological role, catalyzes the ATP-dependent amination of UTP to CTP with either L-glutamine or ammonia as the source of nitrogen. Regulates intracellular CTP levels through interactions with the four ribonucleotide triphosphates. The sequence is that of CTP synthase from Nostoc punctiforme (strain ATCC 29133 / PCC 73102).